Consider the following 56-residue polypeptide: Large ribosomal subunit protein bL32 (56 aa).

Positions 1–26 are disordered; sequence MAVQQNKPTRSKRGMRRSHDSLTTAA.

It belongs to the bacterial ribosomal protein bL32 family.

This Erwinia tasmaniensis (strain DSM 17950 / CFBP 7177 / CIP 109463 / NCPPB 4357 / Et1/99) protein is Large ribosomal subunit protein bL32.